We begin with the raw amino-acid sequence, 2506 residues long: Highly reducing polyketide synthase rstn3 (2506 aa).

The region spanning 8 to 436 (VEPIAIVGMA…GANAHAILDA (429 aa)) is the Ketosynthase family 3 (KS3) domain. Catalysis depends on for beta-ketoacyl synthase activity residues Cys-183, His-318, and His-358. Positions 547-875 (FIFTGQGAQW…KMVGSLFLSG (329 aa)) constitute a Malonyl-CoA:ACP transacylase (MAT) domain. The interval 941–1050 (HDLLGSRLPG…ASDQSISSVE (110 aa)) is N-terminal hotdog fold. Residues 941 to 1212 (HDLLGSRLPG…FSSLETAVGE (272 aa)) enclose the PKS/mFAS DH domain. Catalysis depends on His-973, which acts as the Proton acceptor; for dehydratase activity. The tract at residues 1060–1212 (NKDSYDRRWY…FSSLETAVGE (153 aa)) is C-terminal hotdog fold. Asp-1125 acts as the Proton donor; for dehydratase activity in catalysis. Residues 1263-1563 (VTRLAIRSSA…SGADIVLDDY (301 aa)) form a methyltransferase (CMet) domain region. The 267-residue stretch at 1827 to 2093 (GRVDSFYFKE…QDDYVGRVVL (267 aa)) folds into the Enoyl reductase (ER) domain. The Ketoreductase (KR) domain maps to 2116–2296 (ASYLLIGCLG…QATSIALGMI (181 aa)). The Carrier domain maps to 2423–2501 (AVKVTTLGLI…DLAEKVVALA (79 aa)). Position 2460 is an O-(pantetheine 4'-phosphoryl)serine (Ser-2460).

The cofactor is pantetheine 4'-phosphate.

It participates in antifungal biosynthesis. Functionally, highly reducing polyketide synthase; part of the gene cluster that mediates the biosynthesis of the tetrahydropyranyl antifungal agent restricticin that acts as an inhibitor of CYP51 and blocks the ergosterol biosynthesis. The highly reducing polyketide synthase rstn3, the short chain dehydrogenase rstn4, the cyclase rstn5, the FAD-dependent monooxygenase rstn6 and the enoylreductase rstn7 are required to generate the first stable intermediate desmethylrestrictinol. Rstn3 with rstn7 biosynthesize the first polyketide chain intermediate that is reduced by rstn4, followed by epoxidation by rstn6 before 6-endo cyclization via epoxide opening by rstn5 leads to desmethylrestrictinol. The methyltransferase rstn1 then catalyzes the C4 O-methylation of desmethylrestrictinol to produce restrictinol, and the nonribosomal peptide synthetase rstn8 catalyzes the C3 esterification of restrictinol with glycine that leads to restricticin. This Aspergillus nomiae NRRL (strain ATCC 15546 / NRRL 13137 / CBS 260.88 / M93) protein is Highly reducing polyketide synthase rstn3.